The sequence spans 631 residues: NADPH oxidoreductase A (631 aa).

One can recognise a Flavodoxin-like domain in the interval 73 to 212 (ILILYGTEYG…CFDRYIDTVC (140 aa)). Residues 79 to 83 (TEYGL) and 160 to 191 (VLAL…KRFR) each bind FMN. Residues 247–480 (KKPYSSKLLV…INNNPDFRLP (234 aa)) enclose the FAD-binding FR-type domain. Residue 249-299 (PYSSKLLVKRVLTKGDKVGIHLEFELGDSELKYVPGDALAILPDNAASEVS) coordinates FAD. 504-630 (QERKALGHTG…KEKRYQKDVW (127 aa)) lines the NADP(+) pocket.

Requires FAD as cofactor. The cofactor is FMN.

Its function is as follows. Probable NADPH oxidoreductase that controls development beyond the mound stage. The polypeptide is NADPH oxidoreductase A (redA) (Dictyostelium discoideum (Social amoeba)).